The primary structure comprises 230 residues: Protein UL16 (230 aa).

The first 26 residues, 1-26 (MERRRGTVPLGWVFFVLCLSASSSCA), serve as a signal peptide directing secretion. The Extracellular segment spans residues 27–184 (VDLGSKSSNS…SVSADEELSA (158 aa)). Asn35, Asn41, Asn68, Asn84, Asn95, Asn101, Asn132, and Asn145 each carry an N-linked (GlcNAc...) asparagine; by host glycan. The chain crosses the membrane as a helical span at residues 185 to 205 (TLARDIVLVSAITLFFFLLAL). Residues 206 to 230 (RIPQRLCQRLRIRLPHRYQRLRTED) lie on the Cytoplasmic side of the membrane.

The protein belongs to the HHV-5 UL16 protein family. Interacts with host ULBP1, ULBP2 and MICB.

The protein resides in the host membrane. Functionally, plays a role in escape from host immune response. Blocks the interaction between the host KLRK1 receptor with the ligands ULBP1 and ULBP2. ULBPs activate multiple signaling pathways in primary NK cells, resulting in the production of cytokines and chemokines. The sequestration of diverse KLRK1 ligands in the endoplasmic reticulum and cis-Golgi apparatus of cells by UL16 inhibits the activation of NK cells. This chain is Protein UL16 (UL16), found in Human cytomegalovirus (strain AD169) (HHV-5).